The primary structure comprises 487 residues: 6-phosphogluconate dehydrogenase, decarboxylating 3, chloroplastic (487 aa).

Met1 carries the post-translational modification N-acetylmethionine. NADP(+) contacts are provided by residues 13–18 (GLAVMG), 36–38 (NRT), 80–82 (VKA), and Asn108. Substrate is bound by residues Asn108 and 134 to 136 (SGG). Catalysis depends on Lys188, which acts as the Proton acceptor. 191 to 192 (HN) lines the substrate pocket. Glu195 serves as the catalytic Proton donor. Residues Tyr196, Lys266, Arg293, Arg458, and His464 each coordinate substrate.

The protein belongs to the 6-phosphogluconate dehydrogenase family. Forms homodimer. Forms heterodimers with PGD1 or PGD2.

The protein resides in the plastid. The protein localises to the chloroplast. It localises to the cytoplasm. It is found in the cytosol. The catalysed reaction is 6-phospho-D-gluconate + NADP(+) = D-ribulose 5-phosphate + CO2 + NADPH. It functions in the pathway carbohydrate degradation; pentose phosphate pathway; D-ribulose 5-phosphate from D-glucose 6-phosphate (oxidative stage): step 3/3. Functionally, catalyzes the oxidative decarboxylation of 6-phosphogluconate to ribulose 5-phosphate and CO(2), with concomitant reduction of NADP to NADPH. The sequence is that of 6-phosphogluconate dehydrogenase, decarboxylating 3, chloroplastic from Arabidopsis thaliana (Mouse-ear cress).